We begin with the raw amino-acid sequence, 288 residues long: Bifunctional protein FolD (288 aa).

NADP(+) contacts are provided by residues Gly168–Gly170, Thr195, and Val236.

Belongs to the tetrahydrofolate dehydrogenase/cyclohydrolase family. As to quaternary structure, homodimer.

The enzyme catalyses (6R)-5,10-methylene-5,6,7,8-tetrahydrofolate + NADP(+) = (6R)-5,10-methenyltetrahydrofolate + NADPH. It carries out the reaction (6R)-5,10-methenyltetrahydrofolate + H2O = (6R)-10-formyltetrahydrofolate + H(+). It functions in the pathway one-carbon metabolism; tetrahydrofolate interconversion. Functionally, catalyzes the oxidation of 5,10-methylenetetrahydrofolate to 5,10-methenyltetrahydrofolate and then the hydrolysis of 5,10-methenyltetrahydrofolate to 10-formyltetrahydrofolate. The protein is Bifunctional protein FolD of Mycobacterium sp. (strain JLS).